The chain runs to 328 residues: tRNA uridine(34) hydroxylase (328 aa).

The Rhodanese domain occupies leucine 130 to glutamate 224. Catalysis depends on cysteine 184, which acts as the Cysteine persulfide intermediate.

The protein belongs to the TrhO family.

The enzyme catalyses uridine(34) in tRNA + AH2 + O2 = 5-hydroxyuridine(34) in tRNA + A + H2O. Its function is as follows. Catalyzes oxygen-dependent 5-hydroxyuridine (ho5U) modification at position 34 in tRNAs. The polypeptide is tRNA uridine(34) hydroxylase (Streptococcus sanguinis (strain SK36)).